Reading from the N-terminus, the 295-residue chain is N-acetylmuramic acid 6-phosphate etherase (295 aa).

Positions 54–217 constitute an SIS domain; the sequence is VIAAFRRGGR…STASMVGIGK (164 aa). The active-site Proton donor is E82. The active site involves E113.

It belongs to the GCKR-like family. MurNAc-6-P etherase subfamily. As to quaternary structure, homodimer.

The enzyme catalyses N-acetyl-D-muramate 6-phosphate + H2O = N-acetyl-D-glucosamine 6-phosphate + (R)-lactate. It functions in the pathway amino-sugar metabolism; N-acetylmuramate degradation. Functionally, specifically catalyzes the cleavage of the D-lactyl ether substituent of MurNAc 6-phosphate, producing GlcNAc 6-phosphate and D-lactate. The polypeptide is N-acetylmuramic acid 6-phosphate etherase (Geobacillus thermodenitrificans (strain NG80-2)).